Here is a 271-residue protein sequence, read N- to C-terminus: Protein MGF 360-15R (271 aa).

Belongs to the asfivirus MGF 360 family.

Functionally, plays a role in virus cell tropism, and may be required for efficient virus replication in macrophages. In African swine fever virus (isolate Tick/Malawi/Lil 20-1/1983) (ASFV), this protein is Protein MGF 360-15R.